A 110-amino-acid chain; its full sequence is uncharacterized protein (110 aa).

This is an uncharacterized protein from Human cytomegalovirus (strain AD169) (HHV-5).